The chain runs to 538 residues: Bifunctional purine biosynthesis protein PurH (538 aa).

An MGS-like domain is found at 11 to 158; it reads PDLHRVRRAL…KNHAYTGVVT (148 aa).

It belongs to the PurH family.

It carries out the reaction (6R)-10-formyltetrahydrofolate + 5-amino-1-(5-phospho-beta-D-ribosyl)imidazole-4-carboxamide = 5-formamido-1-(5-phospho-D-ribosyl)imidazole-4-carboxamide + (6S)-5,6,7,8-tetrahydrofolate. The catalysed reaction is IMP + H2O = 5-formamido-1-(5-phospho-D-ribosyl)imidazole-4-carboxamide. It functions in the pathway purine metabolism; IMP biosynthesis via de novo pathway; 5-formamido-1-(5-phospho-D-ribosyl)imidazole-4-carboxamide from 5-amino-1-(5-phospho-D-ribosyl)imidazole-4-carboxamide (10-formyl THF route): step 1/1. The protein operates within purine metabolism; IMP biosynthesis via de novo pathway; IMP from 5-formamido-1-(5-phospho-D-ribosyl)imidazole-4-carboxamide: step 1/1. In Bartonella bacilliformis (strain ATCC 35685 / KC583 / Herrer 020/F12,63), this protein is Bifunctional purine biosynthesis protein PurH.